A 118-amino-acid polypeptide reads, in one-letter code: Large ribosomal subunit protein bL19 (118 aa).

It belongs to the bacterial ribosomal protein bL19 family.

In terms of biological role, this protein is located at the 30S-50S ribosomal subunit interface and may play a role in the structure and function of the aminoacyl-tRNA binding site. The protein is Large ribosomal subunit protein bL19 of Geotalea daltonii (strain DSM 22248 / JCM 15807 / FRC-32) (Geobacter daltonii).